A 209-amino-acid chain; its full sequence is MGRGKIEIKRIENSSNRQVTYSKRRNGILKKAKEISVLCDARVSVIIFASSGKMHEFSSTSLVDILDQYHKLTGRRLWDAKHENLDNEINKVKKDNDNMQIELRHLKGEDITSLNHRELMMLEDALDNGLTSIRNKQNDLLRMMRKKTQSMEEEQDQLNWQLRQLEIASMNRNMGEIGEVFHQRENEYQTQMPFAFRVQPMQPNLQERF.

Positions 3–57 (RGKIEIKRIENSSNRQVTYSKRRNGILKKAKEISVLCDARVSVIIFASSGKMHEF) constitute an MADS-box domain. The 92-residue stretch at 82 to 173 (HENLDNEINK…QLEIASMNRN (92 aa)) folds into the K-box domain.

Expressed mainly in floral organs and, within the flower, expression is restricted to petals and stamens.

The protein localises to the nucleus. Transcription factor involved in the genetic control of flower development. Acts in conjunction with DEFICIENS (defA). In Nicotiana tabacum (Common tobacco), this protein is Floral homeotic protein GLOBOSA (GLO).